The following is a 55-amino-acid chain: ATP synthase F(0) complex subunit 8 (55 aa).

Residues 10-32 (FFIMLASWLTFSLIIQPKLLTFV) traverse the membrane as a helical segment.

Belongs to the ATPase protein 8 family. As to quaternary structure, component of the ATP synthase complex composed at least of ATP5F1A/subunit alpha, ATP5F1B/subunit beta, ATP5MC1/subunit c (homooctomer), MT-ATP6/subunit a, MT-ATP8/subunit 8, ATP5ME/subunit e, ATP5MF/subunit f, ATP5MG/subunit g, ATP5MK/subunit k, ATP5MJ/subunit j, ATP5F1C/subunit gamma, ATP5F1D/subunit delta, ATP5F1E/subunit epsilon, ATP5PF/subunit F6, ATP5PB/subunit b, ATP5PD/subunit d, ATP5PO/subunit OSCP. ATP synthase complex consists of a soluble F(1) head domain (subunits alpha(3) and beta(3)) - the catalytic core - and a membrane F(0) domain - the membrane proton channel (subunits c, a, 8, e, f, g, k and j). These two domains are linked by a central stalk (subunits gamma, delta, and epsilon) rotating inside the F1 region and a stationary peripheral stalk (subunits F6, b, d, and OSCP).

Its subcellular location is the mitochondrion membrane. Subunit 8, of the mitochondrial membrane ATP synthase complex (F(1)F(0) ATP synthase or Complex V) that produces ATP from ADP in the presence of a proton gradient across the membrane which is generated by electron transport complexes of the respiratory chain. ATP synthase complex consist of a soluble F(1) head domain - the catalytic core - and a membrane F(1) domain - the membrane proton channel. These two domains are linked by a central stalk rotating inside the F(1) region and a stationary peripheral stalk. During catalysis, ATP synthesis in the catalytic domain of F(1) is coupled via a rotary mechanism of the central stalk subunits to proton translocation. In vivo, can only synthesize ATP although its ATP hydrolase activity can be activated artificially in vitro. Part of the complex F(0) domain. The polypeptide is ATP synthase F(0) complex subunit 8 (Loxigilla noctis (Lesser Antillean bullfinch)).